Consider the following 306-residue polypeptide: Ubiquitin carboxyl-terminal hydrolase RPN11 (306 aa).

The residue at position 1 (Met-1) is an N-acetylmethionine. The segment at Met-1–Arg-20 is disordered. Positions Val-27–Gly-162 constitute an MPN domain. Residues His-109, His-111, and Asp-122 each coordinate Zn(2+). The JAMM motif signature appears at His-109–Asp-122.

This sequence belongs to the peptidase M67A family. In terms of assembly, component of the lid subcomplex of the 19S proteasome regulatory particle complex (also named PA700 complex). The 26S proteasome consists of a 20S proteasome core and two 19S regulatory subunits. Interacts directly with RPN8 and STS1. In terms of processing, N-acetylated by NAT3.

The enzyme catalyses Thiol-dependent hydrolysis of ester, thioester, amide, peptide and isopeptide bonds formed by the C-terminal Gly of ubiquitin (a 76-residue protein attached to proteins as an intracellular targeting signal).. In terms of biological role, component of the lid subcomplex of the 26S proteasome, a multiprotein complex involved in the ATP-dependent degradation of ubiquitinated proteins. RPN11 is the only catalytically active member of the lid and serves as the essential deubiquitinase of the proteasome. The polypeptide is Ubiquitin carboxyl-terminal hydrolase RPN11 (RPN11) (Saccharomyces cerevisiae (strain ATCC 204508 / S288c) (Baker's yeast)).